The sequence spans 389 residues: Tyrosine aminotransferase (389 aa).

Lys242 carries the N6-(pyridoxal phosphate)lysine modification.

The protein belongs to the class-I pyridoxal-phosphate-dependent aminotransferase family. As to quaternary structure, homodimer. Requires pyridoxal 5'-phosphate as cofactor.

It catalyses the reaction L-tyrosine + 2-oxoglutarate = 3-(4-hydroxyphenyl)pyruvate + L-glutamate. It functions in the pathway amino-acid degradation; L-phenylalanine degradation; acetoacetate and fumarate from L-phenylalanine: step 2/6. In terms of biological role, transaminase involved in tyrosine breakdown. Converts tyrosine to p-hydroxyphenylpyruvate. The protein is Tyrosine aminotransferase (tatA) of Rhizobium meliloti (strain 1021) (Ensifer meliloti).